The sequence spans 499 residues: Rhodopsin, GQ-coupled (499 aa).

Over 1-50 (MADNKSTLPGLPDINGTLNRSMTPNTGWEGPYDMSVHLHWTQFPPVTEEW) the chain is Extracellular. N-linked (GlcNAc...) asparagine glycans are attached at residues Asn4, Asn15, and Asn19. A helical transmembrane segment spans residues 51–75 (HYIIGVYITIVGLLGIMGNTTVVYI). Topologically, residues 76 to 87 (FSNTKSLRSPSN) are cytoplasmic. The chain crosses the membrane as a helical span at residues 88-114 (LFVVNLAVSDLIFSAVNGFPLLTVSSF). At 115–128 (HQKWIFGSLFCQLY) the chain is on the extracellular side. Cys125 and Cys203 are joined by a disulfide. Residues 129-148 (GFVGGVFGLMSINTLTAISI) traverse the membrane as a helical segment. Residues 149-168 (DRYVVITKPLQASQTMTRRK) lie on the Cytoplasmic side of the membrane. The chain crosses the membrane as a helical span at residues 169-192 (VHLMIVIVWVLSILLSIPPFFGWG). Residues 193 to 216 (AYIPEGFQTSCTFDYLTKTARTRT) are Extracellular-facing. The helical transmembrane segment at 217–244 (YIVVLYLFGFLIPLIIIGVCYVLIIRGV) threads the bilayer. Residues 245 to 278 (RRHDQKMLTITRSMKTEDARANNKRARSELRISK) are Cytoplasmic-facing. Residues 279–302 (IAMTVTCLFIISWSPYAIIALIAQ) form a helical membrane-spanning segment. The Extracellular portion of the chain corresponds to 303–310 (FGPAHWIT). A helical transmembrane segment spans residues 311–335 (PLVSELPMMLAKSSSMHNPVVYALS). An N6-(retinylidene)lysine modification is found at Lys322. Residues 336–499 (HPKFRKALYQ…QRVNGLTFNS (164 aa)) lie on the Cytoplasmic side of the membrane. Residues Cys353 and Cys354 are each lipidated (S-palmitoyl cysteine).

Belongs to the G-protein coupled receptor 1 family. Opsin subfamily. Phosphorylated on some or all of the serine and threonine residues present in the C-terminal region. As to expression, retina. Expressed in the depolarizing cell layer of the photoreceptor cells distant from the lens.

The protein localises to the membrane. Its function is as follows. Visual pigments such as rhodopsin and porphyropsin are light-absorbing molecules that mediate vision. Rhodopsin consists of an apoprotein, opsin, covalently linked to 11-cis-retinal. This receptor is coupled to the activation of phospholipase C. Porphyropsin consists of opsin covalently linked to 11-cis 3,4-didehydroretinal. In Mizuhopecten yessoensis (Japanese scallop), this protein is Rhodopsin, GQ-coupled (SCOP1).